The primary structure comprises 578 residues: Probable actinorhodin transporter (578 aa).

The disordered stretch occupies residues 1–33; the sequence is MSSVEADEPDRATAPPSALLPEDGPGPDGTAAG. 12 consecutive transmembrane segments (helical) span residues 78–98, 109–129, 135–155, 170–190, 202–222, 232–252, 259–279, 306–326, 341–361, 369–389, 444–464, and 546–566; these read VIQW…VVGG, MFVV…VAAG, AARF…LGLI, AFGP…GFLV, VFLI…LLLP, FDVV…FPLV, WPAW…GFVA, GLAV…LLAL, LTMT…GAVL, ALHG…LTIG, LGFT…LGSQ, and AMVR…ALAF.

This sequence belongs to the major facilitator superfamily. EmrB family.

The protein localises to the cell membrane. In terms of biological role, promotes the efflux of actinorhodin. This is Probable actinorhodin transporter (actII-2) from Streptomyces coelicolor (strain ATCC BAA-471 / A3(2) / M145).